Consider the following 310-residue polypeptide: Glutarate 2-hydroxylase (310 aa).

Fe cation is bound by residues histidine 160, aspartate 162, and histidine 277.

This sequence belongs to the glutarate hydroxylase family. In terms of assembly, homotetramer. Fe(2+) serves as cofactor.

The catalysed reaction is glutarate + 2-oxoglutarate + O2 = (S)-2-hydroxyglutarate + succinate + CO2. It functions in the pathway amino-acid degradation. In terms of biological role, acts as an alpha-ketoglutarate-dependent dioxygenase catalyzing hydroxylation of glutarate (GA) to L-2-hydroxyglutarate (L2HG). Functions in a L-lysine degradation pathway that proceeds via cadaverine, glutarate and L-2-hydroxyglutarate. The sequence is that of Glutarate 2-hydroxylase from Shigella flexneri.